Consider the following 283-residue polypeptide: Urease accessory protein UreD 2 (283 aa).

Over residues 1–11 (MGRRAPDRLDR) the composition is skewed to basic and acidic residues. The disordered stretch occupies residues 1–30 (MGRRAPDRLDRGVTTTSPRTQAPPQAGRGV). Positions 13–23 (VTTTSPRTQAP) are enriched in polar residues.

The protein belongs to the UreD family. In terms of assembly, ureD, UreF and UreG form a complex that acts as a GTP-hydrolysis-dependent molecular chaperone, activating the urease apoprotein by helping to assemble the nickel containing metallocenter of UreC. The UreE protein probably delivers the nickel.

The protein localises to the cytoplasm. Its function is as follows. Required for maturation of urease via the functional incorporation of the urease nickel metallocenter. This is Urease accessory protein UreD 2 from Saccharopolyspora erythraea (strain ATCC 11635 / DSM 40517 / JCM 4748 / NBRC 13426 / NCIMB 8594 / NRRL 2338).